The sequence spans 1072 residues: PWWP domain-containing protein 1 (1072 aa).

The tract at residues 21–133 (DSIQDPKVTP…ADEKELDLGL (113 aa)) is disordered. Over residues 25 to 38 (DPKVTPDDTVVDSS) the composition is skewed to low complexity. Residues 66–77 (RVLESERSEKDG) show a composition bias toward basic and acidic residues. Over residues 96-128 (KDDESSEVKEEEEEEDGSDDQSSELGSEADEKE) the composition is skewed to acidic residues. A PWWP domain is found at 173-234 (VGDLVWGKVK…PAELIPFEPN (62 aa)). Positions 365 to 387 (KSPRSSVSTLEPHNRAPPRAPLS) are disordered. A compositionally biased stretch (polar residues) spans 366-375 (SPRSSVSTLE). The Nuclear localization signal 1 motif lies at 402–409 (SKKPTKVK). Disordered regions lie at residues 486–619 (AIPG…GEAG), 681–738 (LSVS…KTNQ), 871–931 (KAEP…NGNR), and 944–973 (ENSS…SSSV). Residues 498-526 (SLDEEKGLAEKSKERMEERAAVLPEHGKS) are compositionally biased toward basic and acidic residues. The span at 545-568 (AGSSLQPLLESHTSASEGKSSTGS) shows a compositional bias: polar residues. Short sequence motifs (nuclear localization signal) lie at residues 596–603 (KKKKKEPD), 705–712 (VKRTEDPS), and 733–740 (LKKTNQLK). The segment covering 706-729 (KRTEDPSKAGKKRLSSDRQDEIPS) has biased composition (basic and acidic residues). Residues 871 to 880 (KAEPREPENT) show a composition bias toward basic and acidic residues. Positions 897–906 (LHQPTLPPPN) are enriched in pro residues. Over residues 921 to 930 (SSSSNNGNGN) the composition is skewed to low complexity. Over residues 947–966 (SKANTEPPQVTMTLNRNSGP) the composition is skewed to polar residues.

The protein belongs to the PDP family. As to quaternary structure, interacts with MSI4/FVE. Component of the PRC2 (polycomb repressive complex 2) complex which regulates histone methylation on histone H3K27.

It is found in the nucleus. Its function is as follows. Together with PDP2, PDP3 and PDP6, interacts with MSI4/FVE and MSI5 to suppress FLC, MAF4 and MAF5 expression by regulating the function of the PRC2 complex and modulating H3K27me3 level, thereby promoting flowering. The polypeptide is PWWP domain-containing protein 1 (Arabidopsis thaliana (Mouse-ear cress)).